We begin with the raw amino-acid sequence, 121 residues long: Basic phospholipase A2 daboxin P (121 aa).

Cystine bridges form between Cys26-Cys115, Cys28-Cys44, Cys43-Cys95, Cys49-Cys121, Cys50-Cys88, Cys57-Cys81, and Cys75-Cys86. Residues Tyr27, Gly29, and Gly31 each contribute to the Ca(2+) site. His47 is an active-site residue. Asp48 is a binding site for Ca(2+). Asp89 is an active-site residue.

It depends on Ca(2+) as a cofactor. Expressed by the venom gland.

It is found in the secreted. The catalysed reaction is a 1,2-diacyl-sn-glycero-3-phosphocholine + H2O = a 1-acyl-sn-glycero-3-phosphocholine + a fatty acid + H(+). Functionally, snake venom phospholipase A2 (PLA2) that exhibits anticoagulant activity, probably by binding to factor X and its activated form factor Xa (F10). Shows no cytotoxicity. PLA2 catalyzes the calcium-dependent hydrolysis of the 2-acyl groups in 3-sn-phosphoglycerides. The protein is Basic phospholipase A2 daboxin P of Daboia russelii (Russel's viper).